Here is a 238-residue protein sequence, read N- to C-terminus: LexA repressor (238 aa).

Residues 26-46 (FDEMKDALELRSKSGIHRLIS) constitute a DNA-binding region (H-T-H motif). Residues S159 and K197 each act as for autocatalytic cleavage activity in the active site.

The protein belongs to the peptidase S24 family. In terms of assembly, homodimer.

The enzyme catalyses Hydrolysis of Ala-|-Gly bond in repressor LexA.. Represses a number of genes involved in the response to DNA damage (SOS response), including recA and lexA. In the presence of single-stranded DNA, RecA interacts with LexA causing an autocatalytic cleavage which disrupts the DNA-binding part of LexA, leading to derepression of the SOS regulon and eventually DNA repair. This chain is LexA repressor, found in Gluconobacter oxydans (strain 621H) (Gluconobacter suboxydans).